The primary structure comprises 98 residues: Integration host factor subunit alpha (98 aa).

Residues 51–71 form a disordered region; that stretch reads NFDLRDKNERPGRNPKTGEDI. The span at 53–69 shows a compositional bias: basic and acidic residues; it reads DLRDKNERPGRNPKTGE.

It belongs to the bacterial histone-like protein family. Heterodimer of an alpha and a beta chain.

This protein is one of the two subunits of integration host factor, a specific DNA-binding protein that functions in genetic recombination as well as in transcriptional and translational control. The protein is Integration host factor subunit alpha of Vibrio parahaemolyticus serotype O3:K6 (strain RIMD 2210633).